The primary structure comprises 1901 residues: A-kinase anchor protein 11 (1901 aa).

A phosphoserine mark is found at Ser18, Ser422, Ser433, Ser444, and Ser448. The interval 407 to 443 (ALPANVRKPTPRKPESPYGNLCDAPDSPRPVKASRED) is disordered. Disordered regions lie at residues 843–864 (NPGN…SSSK) and 971–993 (LPVS…DSQN). 2 positions are modified to phosphothreonine: Thr981 and Thr1100. The segment at 1131–1153 (EFAPATPPSTPHNSSVGSLSENE) is disordered. Residues 1141–1153 (PHNSSVGSLSENE) are compositionally biased toward polar residues. Ser1171, Ser1176, Ser1177, Ser1242, and Ser1337 each carry phosphoserine. The residue at position 1485 (Thr1485) is a Phosphothreonine. Phosphoserine is present on Ser1580. Positions 1650–1663 (LAEKIVAEAIEKAE) are PKA-RII subunit binding domain. The segment at 1708-1805 (KEIEDFQSTE…HEDEVEGLGQ (98 aa)) is disordered. A compositionally biased stretch (polar residues) spans 1713 to 1740 (FQSTESVSSQQMNLSIGDDSTGSWSNLS). The segment covering 1747-1756 (DESSSFHHLS) has biased composition (basic and acidic residues). The segment covering 1757–1772 (ESNGNSSSWSSLGLEG) has biased composition (low complexity). Acidic residues predominate over residues 1787 to 1801 (DGPDDKDEEHEDEVE).

This sequence belongs to the AKAP110 family. In terms of tissue distribution, expressed in heart, brain, lung, liver, kidney, testis and ovary. Weakly expressed in skeletal muscle, pancreas and spleen.

It is found in the cytoplasm. The protein resides in the cytoskeleton. It localises to the microtubule organizing center. The protein localises to the centrosome. Its function is as follows. Binds to type II regulatory subunits of protein kinase A and anchors/targets them. In Homo sapiens (Human), this protein is A-kinase anchor protein 11 (AKAP11).